A 246-amino-acid chain; its full sequence is Triosephosphate isomerase (246 aa).

Residue 9-11 participates in substrate binding; that stretch reads NWK. The active-site Electrophile is histidine 91. Catalysis depends on glutamate 161, which acts as the Proton acceptor. Residues glycine 167, serine 206, and 227–228 contribute to the substrate site; that span reads GG.

Belongs to the triosephosphate isomerase family. In terms of assembly, homodimer.

It localises to the cytoplasm. It carries out the reaction D-glyceraldehyde 3-phosphate = dihydroxyacetone phosphate. It participates in carbohydrate biosynthesis; gluconeogenesis. Its pathway is carbohydrate degradation; glycolysis; D-glyceraldehyde 3-phosphate from glycerone phosphate: step 1/1. Involved in the gluconeogenesis. Catalyzes stereospecifically the conversion of dihydroxyacetone phosphate (DHAP) to D-glyceraldehyde-3-phosphate (G3P). In Ruegeria sp. (strain TM1040) (Silicibacter sp.), this protein is Triosephosphate isomerase.